The sequence spans 676 residues: Ribosome quality control complex subunit TCF25 (676 aa).

Disordered stretches follow at residues 1-59 (MSRR…VRVN) and 85-147 (LTDA…ENGL). Residues 123 to 136 (GKLRKKKKKQKNKK) are compositionally biased toward basic residues. At Ser-602 the chain carries Phosphoserine.

This sequence belongs to the TCF25 family. Component of the ribosome quality control complex (RQC), composed of the E3 ubiquitin ligase LTN1, TCF25 and NEMF associated with the 60S ribosomal subunit. Interacts (via C-terminus) with NFATC4; the interaction leads to suppresson of NFATC4 transcription factor activity and is reduced following stimulation with angiotensin-2. Interacts with XIAP. In terms of tissue distribution, in the embryo, widely expressed with highest levels in brain. In the adult, highest expression is found in the heart. Repressed in cardiac tissue of patients with heart failure (at protein level). mRNA levels in the heart are unchanged in patients with heart failure.

The protein localises to the nucleus. It is found in the cytoplasm. Its subcellular location is the cytosol. In terms of biological role, component of the ribosome quality control complex (RQC), a ribosome-associated complex that mediates ubiquitination and extraction of incompletely synthesized nascent chains for proteasomal degradation. In the RQC complex, required to promote formation of 'Lys-48'-linked polyubiquitin chains during ubiquitination of incompletely synthesized proteins by LTN1. May negatively regulate the calcineurin-NFAT signaling cascade by suppressing the activity of transcription factor NFATC4. May play a role in cell death control. This chain is Ribosome quality control complex subunit TCF25, found in Homo sapiens (Human).